The primary structure comprises 476 residues: Bifunctional protein HldE (476 aa).

Positions 1 to 319 (MKPTLPNYDQ…EAIHGSQDSG (319 aa)) are ribokinase. 195–198 (NMLE) lines the ATP pocket. Asp264 is an active-site residue. The tract at residues 344-476 (MTNGCFDILH…IIEAIKGGRG (133 aa)) is cytidylyltransferase.

This sequence in the N-terminal section; belongs to the carbohydrate kinase PfkB family. In the C-terminal section; belongs to the cytidylyltransferase family. As to quaternary structure, homodimer.

The catalysed reaction is D-glycero-beta-D-manno-heptose 7-phosphate + ATP = D-glycero-beta-D-manno-heptose 1,7-bisphosphate + ADP + H(+). The enzyme catalyses D-glycero-beta-D-manno-heptose 1-phosphate + ATP + H(+) = ADP-D-glycero-beta-D-manno-heptose + diphosphate. It functions in the pathway nucleotide-sugar biosynthesis; ADP-L-glycero-beta-D-manno-heptose biosynthesis; ADP-L-glycero-beta-D-manno-heptose from D-glycero-beta-D-manno-heptose 7-phosphate: step 1/4. Its pathway is nucleotide-sugar biosynthesis; ADP-L-glycero-beta-D-manno-heptose biosynthesis; ADP-L-glycero-beta-D-manno-heptose from D-glycero-beta-D-manno-heptose 7-phosphate: step 3/4. Its function is as follows. Catalyzes the phosphorylation of D-glycero-D-manno-heptose 7-phosphate at the C-1 position to selectively form D-glycero-beta-D-manno-heptose-1,7-bisphosphate. Functionally, catalyzes the ADP transfer from ATP to D-glycero-beta-D-manno-heptose 1-phosphate, yielding ADP-D-glycero-beta-D-manno-heptose. The polypeptide is Bifunctional protein HldE (Aliivibrio fischeri (strain ATCC 700601 / ES114) (Vibrio fischeri)).